The sequence spans 991 residues: MTPSSTKKIKQRRSTSCTVCRTIKRKCDGNTPCSNCLKRNQECIYPDVDKRKKRYSIEYITNLENTNQQLHDQLQSLIDLKDNPYQLHLKITEILESSSSFLDNSETKSDSSLGSPELSKSEASLANSFTLGGELVVSSREQGANFHVHLNQQQQQQQPSPQSLSQSSASEVSTRSSPASPNSTISLAPQILRIPSRPFQQQTRQNLLRQSDLPLHYPISGKTSGPNASNITGSIASTISGSRKSSISVDISPPPSLPVFPTSGPTLPTLLPEPLPRNDFDFAPKFFPAPGGKSNMAFGATTVYDADESMVMNVNQIEERWGTGIKLAKLRNVPNIQNRSSSSSSTLIKVNKRTIEEVIKMITNSKAKKYFALAFKYFDRPILCYLIPRGKVIKLYEEICAHKNDLATVEDILGLYPTNQFISIELIAALIASGALYDDNIDCVREYLTLSKTEMFINNSGCLVFNESSYPKLQAMLVCALLELGLGELTTAWELSGIALRMGIDLGFDSFIYDDSDKEIDNLRNLVFWGSYIIDKYAGLIFGRITMLYVDNSVPLIFLPNRQGKLPCLAQLIIDTQPMISSIYETIPETKNDPEMSKKIFLERYNLLQGYNKSLGAWKRGLSREYFWNKSILINTITDESVDHSLKIAYYLIFLIMNKPFLKLPIGSDIDTFIEIVDEMEIIMRYIPDDKHLLNLVVYYALVLMIQSLVAQVSYTNANNYTQNSKFMNQLLFFIDRMGEVLRVDIWLICKKVHSNFQQKVEYLEKLMLDLTEKMEQRRRDEENLMMQQEEFYAQQQQQQQQQQQQPKHEYHDHQQEQEQQEQLQEEHSEKDIKIEIKDEPQPQEEHIHQDYPMKEEEENLNQLSEPQTNEEDNPAEDMLQNEQFMRMVDILFIRGIENDQEEGEEQQQQQQQQEQVQQEQVQQEQVQQDQMELEEDELPQQMPTSPEQPDEPEIPQLPEILDPTFFNSIVDNNGSTFNNIFSFDTEGFRL.

The zn(2)-C6 fungal-type DNA-binding region spans 17–43 (CTVCRTIKRKCDGNTPCSNCLKRNQEC). Disordered stretches follow at residues 150 to 188 (LNQQ…ISLA), 792 to 875 (FYAQ…EDNP), and 901 to 959 (QEEG…PQLP). Low complexity predominate over residues 152–168 (QQQQQQQPSPQSLSQSS). The segment covering 169-187 (ASEVSTRSSPASPNSTISL) has biased composition (polar residues). Over residues 795-806 (QQQQQQQQQQQQ) the composition is skewed to low complexity. 2 stretches are compositionally biased toward basic and acidic residues: residues 807–817 (PKHEYHDHQQE) and 825–855 (QEEH…YPMK). Over residues 907 to 931 (QQQQQQQQEQVQQEQVQQEQVQQDQ) the composition is skewed to low complexity.

The protein localises to the nucleus. Its function is as follows. Transcription factor that mediates conventional biofilm formation and plays a key role in microcolony formation under both flow and static conditions and to epithelial surfaces. Modulates infection of mammalian hosts. In Candida albicans (strain SC5314 / ATCC MYA-2876) (Yeast), this protein is Transcription factor ROB1.